Reading from the N-terminus, the 448-residue chain is Exodeoxyribonuclease 7 large subunit (448 aa).

This sequence belongs to the XseA family. In terms of assembly, heterooligomer composed of large and small subunits.

It is found in the cytoplasm. It carries out the reaction Exonucleolytic cleavage in either 5'- to 3'- or 3'- to 5'-direction to yield nucleoside 5'-phosphates.. Bidirectionally degrades single-stranded DNA into large acid-insoluble oligonucleotides, which are then degraded further into small acid-soluble oligonucleotides. This chain is Exodeoxyribonuclease 7 large subunit, found in Nitrosomonas europaea (strain ATCC 19718 / CIP 103999 / KCTC 2705 / NBRC 14298).